We begin with the raw amino-acid sequence, 81 residues long: Putative membrane protein insertion efficiency factor (81 aa).

Positions Asn61–Glu81 are disordered.

The protein belongs to the UPF0161 family.

It is found in the cell inner membrane. Its function is as follows. Could be involved in insertion of integral membrane proteins into the membrane. The protein is Putative membrane protein insertion efficiency factor of Pseudomonas fluorescens (strain Pf0-1).